Reading from the N-terminus, the 525-residue chain is Nucleolar complex protein 4 homolog B (525 aa).

A compositionally biased stretch (basic residues) spans 1 to 10 (MAARKAKHAF). Positions 1–21 (MAARKAKHAFRSQATQSDAER) are disordered. 3 helical membrane-spanning segments follow: residues 307–327 (AAYDVGGAISLLALNGLFILI), 358–378 (FFHLANLFLSSTHLPVYLVAA), and 386–406 (LALTAPPQVLLMIIPFICNLI).

It belongs to the CBF/MAK21 family.

Its subcellular location is the nucleus membrane. The protein resides in the nucleus. It localises to the nucleolus. In Xenopus laevis (African clawed frog), this protein is Nucleolar complex protein 4 homolog B (noc4l-b).